Consider the following 618-residue polypeptide: Glutamine--fructose-6-phosphate aminotransferase [isomerizing] (618 aa).

Catalysis depends on Cys-2, which acts as the Nucleophile; for GATase activity. The Glutamine amidotransferase type-2 domain maps to 2 to 226; sequence CGIVGYAGRN…DFETAVLTPD (225 aa). The tract at residues 72 to 91 is disordered; it reads WATHGRPSTENAHPHNSGGN. SIS domains are found at residues 295–434 and 467–608; these read NDDE…VRGK and CAEN…IDKP. Lys-613 serves as the catalytic For Fru-6P isomerization activity.

As to quaternary structure, homodimer.

The protein localises to the cytoplasm. It catalyses the reaction D-fructose 6-phosphate + L-glutamine = D-glucosamine 6-phosphate + L-glutamate. In terms of biological role, catalyzes the first step in hexosamine metabolism, converting fructose-6P into glucosamine-6P using glutamine as a nitrogen source. This Methanosarcina mazei (strain ATCC BAA-159 / DSM 3647 / Goe1 / Go1 / JCM 11833 / OCM 88) (Methanosarcina frisia) protein is Glutamine--fructose-6-phosphate aminotransferase [isomerizing].